Reading from the N-terminus, the 260-residue chain is Adenosylcobinamide-GDP ribazoletransferase (260 aa).

The next 6 helical transmembrane spans lie at 40–60 (AFPF…LLLL), 64–84 (ADPL…TGAL), 117–137 (YGAI…AAIV), 142–162 (PLAA…AITW), 189–209 (FALV…FGLW), and 210–230 (PLVA…VFIR).

It belongs to the CobS family. Mg(2+) is required as a cofactor.

It localises to the cell inner membrane. It carries out the reaction alpha-ribazole + adenosylcob(III)inamide-GDP = adenosylcob(III)alamin + GMP + H(+). The catalysed reaction is alpha-ribazole 5'-phosphate + adenosylcob(III)inamide-GDP = adenosylcob(III)alamin 5'-phosphate + GMP + H(+). The protein operates within cofactor biosynthesis; adenosylcobalamin biosynthesis; adenosylcobalamin from cob(II)yrinate a,c-diamide: step 7/7. Functionally, joins adenosylcobinamide-GDP and alpha-ribazole to generate adenosylcobalamin (Ado-cobalamin). Also synthesizes adenosylcobalamin 5'-phosphate from adenosylcobinamide-GDP and alpha-ribazole 5'-phosphate. The polypeptide is Adenosylcobinamide-GDP ribazoletransferase (Rhizobium etli (strain CIAT 652)).